Here is a 200-residue protein sequence, read N- to C-terminus: Holliday junction branch migration complex subunit RuvA (200 aa).

The domain I stretch occupies residues 1 to 64; it reads MIGQLTGLVG…EDAIQLFGFA (64 aa). Residues 65–143 are domain II; sequence TTDERDWFRL…KMPGGGGTVS (79 aa). Residues 144-148 are flexible linker; that stretch reads APGIV. A domain III region spans residues 149-200; the sequence is SGPSVENDALLALAGLGFRRAEAWPVLSKVLAENENATLDLAIRLSLKDLAR.

The protein belongs to the RuvA family. As to quaternary structure, homotetramer. Forms an RuvA(8)-RuvB(12)-Holliday junction (HJ) complex. HJ DNA is sandwiched between 2 RuvA tetramers; dsDNA enters through RuvA and exits via RuvB. An RuvB hexamer assembles on each DNA strand where it exits the tetramer. Each RuvB hexamer is contacted by two RuvA subunits (via domain III) on 2 adjacent RuvB subunits; this complex drives branch migration. In the full resolvosome a probable DNA-RuvA(4)-RuvB(12)-RuvC(2) complex forms which resolves the HJ.

The protein resides in the cytoplasm. Functionally, the RuvA-RuvB-RuvC complex processes Holliday junction (HJ) DNA during genetic recombination and DNA repair, while the RuvA-RuvB complex plays an important role in the rescue of blocked DNA replication forks via replication fork reversal (RFR). RuvA specifically binds to HJ cruciform DNA, conferring on it an open structure. The RuvB hexamer acts as an ATP-dependent pump, pulling dsDNA into and through the RuvAB complex. HJ branch migration allows RuvC to scan DNA until it finds its consensus sequence, where it cleaves and resolves the cruciform DNA. This Gluconobacter oxydans (strain 621H) (Gluconobacter suboxydans) protein is Holliday junction branch migration complex subunit RuvA.